Reading from the N-terminus, the 142-residue chain is Hemoglobin subunit alpha 1 (142 aa).

Ser-1 carries the N-acetylserine modification. In terms of domain architecture, Globin spans 1–142 (SLSDKDKAAV…VSLALSERYR (142 aa)). Position 59 (His-59) interacts with O2. Residue His-88 coordinates heme b.

Belongs to the globin family. As to quaternary structure, hb1 is a heterotetramer of two alpha-1 chains and two beta-1 chains. Hb2 is a heterotetramer of two alpha-2 chains and two beta-1 chains. HbC is a heterotetramer of two alpha-1 chains and two beta-2 chains. As to expression, red blood cells.

Involved in oxygen transport from gills to the various peripheral tissues. The chain is Hemoglobin subunit alpha 1 from Eleginops maclovinus (Patagonian blennie).